Reading from the N-terminus, the 293-residue chain is MASITLTPSEKDIQAFLEHYQTSLAPSKNPYIRYFLKLPQATVSIYTSGKILLQGEGAEKYASFFGYQAVEQTSGQNLPLIGTDEVGNGSYFGGLAVVAAFVTPDQHDFLRKLGVGDSKTLTDQKIRQIAPILKEKIQHQALLLSPSKYNEVIGDRYNAVSVKVALHNQAIYLLLQKGVQPEKIVIDAFTSAKNYDKYLAQEANRFSNPISLEEKAEGKYLAVAVSSVIARDLFLENLENLGRELGYQLPSGAGTASDKVASQILQAYGMQGLSFCAKLHFKNTEKAKKRLER.

The RNase H type-2 domain maps to L78–R293. A divalent metal cation is bound by residues D84, E85, and D187.

It belongs to the RNase HII family. RnhC subfamily. The cofactor is Mn(2+). It depends on Mg(2+) as a cofactor.

The protein resides in the cytoplasm. The catalysed reaction is Endonucleolytic cleavage to 5'-phosphomonoester.. In terms of biological role, endonuclease that specifically degrades the RNA of RNA-DNA hybrids. This Streptococcus pneumoniae (strain JJA) protein is Ribonuclease HIII.